Reading from the N-terminus, the 100-residue chain is Nucleoid-associated protein ckrop_0143 (100 aa).

Belongs to the YbaB/EbfC family. In terms of assembly, homodimer.

The protein localises to the cytoplasm. It localises to the nucleoid. Its function is as follows. Binds to DNA and alters its conformation. May be involved in regulation of gene expression, nucleoid organization and DNA protection. The polypeptide is Nucleoid-associated protein ckrop_0143 (Corynebacterium kroppenstedtii (strain DSM 44385 / JCM 11950 / CIP 105744 / CCUG 35717)).